The chain runs to 504 residues: MTTSIVIGVVLVTVGLTFGWTIRWLYARFHLSACEQRAERILQEAQKEAESKKKSILLEAKEYVLRERNQQERDDRDRRAELQRAERRLLQKEEALSTRAGELDSRERSLKQRDQSLCQEEARYRQELERVSGLTQNQARDLIIKNLENEAKHDAQALINKIEEDAALNAERRARDILVTTMQRITADVTGDVTVSTVNLPSEEMKGRIIGREGRNIRALETLTGADVVVDDTPEAVVISCFDPVRKEIARISLERLVLDGRIHPARIEEIVQKVTQEVSQKIYEEGEKVLFDLGIHDMCPEGVRALGRLYFRTSYGQNVLYHSKEVALLASMLASEIGADVAIAKRGALLHDIGKGVETDSDRNHAEIGMEMARKMNEDPRVVNAVGSHHNDIEPCCVESWLVQVADAISAARPGARREMVDHYVKRLENLEAIAEGFSGVEKAYAIQAGRELRVLVNNDKIPDRDVKALGRDIAKKIESDLKYPGRIRVTLIRETRVVEYAR.

A helical transmembrane segment spans residues 2-22 (TTSIVIGVVLVTVGLTFGWTI). One can recognise a KH domain in the interval 194-279 (TVSTVNLPSE…EIVQKVTQEV (86 aa)). Positions 320–413 (VLYHSKEVAL…VQVADAISAA (94 aa)) constitute an HD domain.

The protein belongs to the RNase Y family.

The protein localises to the cell membrane. Functionally, endoribonuclease that initiates mRNA decay. The protein is Ribonuclease Y of Treponema pallidum (strain Nichols).